The primary structure comprises 260 residues: Snake venom serine protease homolog (260 aa).

An N-terminal signal peptide occupies residues 1 to 18; the sequence is MVLIRVLANLLILQLSYA. A propeptide spanning residues 19-24 is cleaved from the precursor; it reads QKASEL. Positions 25–251 constitute a Peptidase S1 domain; that stretch reads IIGGDECNIN…YTEWIRSIIA (227 aa). Intrachain disulfides connect cysteine 31/cysteine 165, cysteine 52/cysteine 68, cysteine 100/cysteine 258, cysteine 144/cysteine 212, cysteine 176/cysteine 191, and cysteine 202/cysteine 227. The N-linked (GlcNAc...) asparagine glycan is linked to asparagine 83.

It belongs to the peptidase S1 family. Snake venom subfamily. In terms of tissue distribution, expressed by the venom gland.

The protein resides in the secreted. Functionally, snake venom serine protease homolog that may act in the hemostasis system of the prey. The chain is Snake venom serine protease homolog from Bothrops jararacussu (Jararacussu).